The chain runs to 556 residues: Oxygen-dependent choline dehydrogenase (556 aa).

4–33 (DYIIIGAGSAGNVLATRLTEDPNTSVLLLE) provides a ligand contact to FAD. Catalysis depends on His-473, which acts as the Proton acceptor.

The protein belongs to the GMC oxidoreductase family. Requires FAD as cofactor.

It carries out the reaction choline + A = betaine aldehyde + AH2. The catalysed reaction is betaine aldehyde + NAD(+) + H2O = glycine betaine + NADH + 2 H(+). It participates in amine and polyamine biosynthesis; betaine biosynthesis via choline pathway; betaine aldehyde from choline (cytochrome c reductase route): step 1/1. Its function is as follows. Involved in the biosynthesis of the osmoprotectant glycine betaine. Catalyzes the oxidation of choline to betaine aldehyde and betaine aldehyde to glycine betaine at the same rate. The sequence is that of Oxygen-dependent choline dehydrogenase from Escherichia coli O139:H28 (strain E24377A / ETEC).